Reading from the N-terminus, the 757-residue chain is MRRLIPIAITGSLLWGAAVQAQGPTAAEREAYFAERQRALCGPPLVMPLDAVDTALRHRPETPATVDADAIYYDGAAGRYRFRGDVLMQRLDQRLRSEEVRYDHASGRVDLPFPFVYEEAGLALTGESGWLQLREDRGEVVAGEFMLDERNIRGRAERLELADAQRSRYEDVGYTTCRPGNEDWWLQARELELDREEGLGTARHAWFTFLNVPLFYTPWITFPIDDRRRTGLLAPGFATSDRHGTDITVPVYWNIAPNYDATLVPRWIERRGALLGGEFRYLQEAFSGELYGEYLPNDSLARDDRWLLGIDHRGRLPRGWRYDADINRASDGDYLRDFGSGLLETSSSHLQSRGRLRNRWNDWAVAAEVQHWQTLDDDLRNPYRREPRLTADYQGPFRAGQPRYRLNTEYTRFALPDTDADRPEGERMDIAPRVEWRLHRPWGYLTPAAALRHTQYRLDDPVPGADDRSPRRTVPTFSVDSGLFFDRPFDWDGRPMVQTLEPRVFYVYTPERRQDDLPVFDTSRRDFFFDGLFREDRFSGADRVGDADQVTVALTTRFVDLGGGREWLRASLGQIHYRRDRQVTLFPETDRAADRRSRSDYMAEMRSELPGGVLAQGEYRYNPYDSRSEQGAFRLGWHPRPDLLVGAGYRMRYGDEGRDVEQSDLAAVIPLGPRFSLIGRWLYSLADDNSLETVGGLEYRTCCWRVRAMGRRSFEGAGAEPDTSIMLQFEFTGLGQVDSGSTDFLQDSIYGYEGDRF.

The signal sequence occupies residues 1–21; that stretch reads MRRLIPIAITGSLLWGAAVQA.

It belongs to the LptD family. In terms of assembly, component of the lipopolysaccharide transport and assembly complex. Interacts with LptE and LptA.

It is found in the cell outer membrane. Its function is as follows. Together with LptE, is involved in the assembly of lipopolysaccharide (LPS) at the surface of the outer membrane. The chain is LPS-assembly protein LptD from Alkalilimnicola ehrlichii (strain ATCC BAA-1101 / DSM 17681 / MLHE-1).